The sequence spans 249 residues: 2,3-bisphosphoglycerate-dependent phosphoglycerate mutase (249 aa).

Substrate is bound by residues 8–15, 21–22, Arg60, 87–90, Lys98, 114–115, and 183–184; these read RHGESTWN, TG, ERHY, RR, and GN. His9 serves as the catalytic Tele-phosphohistidine intermediate. Catalysis depends on Glu87, which acts as the Proton donor/acceptor.

This sequence belongs to the phosphoglycerate mutase family. BPG-dependent PGAM subfamily. Homodimer.

It catalyses the reaction (2R)-2-phosphoglycerate = (2R)-3-phosphoglycerate. The protein operates within carbohydrate degradation; glycolysis; pyruvate from D-glyceraldehyde 3-phosphate: step 3/5. In terms of biological role, catalyzes the interconversion of 2-phosphoglycerate and 3-phosphoglycerate. This Burkholderia mallei (strain NCTC 10247) protein is 2,3-bisphosphoglycerate-dependent phosphoglycerate mutase.